The primary structure comprises 95 residues: Pyrimidine/purine nucleoside phosphorylase (95 aa).

Belongs to the nucleoside phosphorylase PpnP family.

The catalysed reaction is a purine D-ribonucleoside + phosphate = a purine nucleobase + alpha-D-ribose 1-phosphate. It carries out the reaction adenosine + phosphate = alpha-D-ribose 1-phosphate + adenine. The enzyme catalyses cytidine + phosphate = cytosine + alpha-D-ribose 1-phosphate. It catalyses the reaction guanosine + phosphate = alpha-D-ribose 1-phosphate + guanine. The catalysed reaction is inosine + phosphate = alpha-D-ribose 1-phosphate + hypoxanthine. It carries out the reaction thymidine + phosphate = 2-deoxy-alpha-D-ribose 1-phosphate + thymine. The enzyme catalyses uridine + phosphate = alpha-D-ribose 1-phosphate + uracil. It catalyses the reaction xanthosine + phosphate = alpha-D-ribose 1-phosphate + xanthine. Catalyzes the phosphorolysis of diverse nucleosides, yielding D-ribose 1-phosphate and the respective free bases. Can use uridine, adenosine, guanosine, cytidine, thymidine, inosine and xanthosine as substrates. Also catalyzes the reverse reactions. The polypeptide is Pyrimidine/purine nucleoside phosphorylase (Enterobacter sp. (strain 638)).